A 160-amino-acid polypeptide reads, in one-letter code: Large ribosomal subunit protein eL14 (160 aa).

The tract at residues 136–160 (SDGTPRILKKDRRERLRAEKAKAKK) is disordered. Residues 146-160 (DRRERLRAEKAKAKK) show a composition bias toward basic and acidic residues.

This sequence belongs to the eukaryotic ribosomal protein eL14 family.

The sequence is that of Large ribosomal subunit protein eL14 (RpL14) from Drosophila virilis (Fruit fly).